The sequence spans 155 residues: Class I hydrophobin C (155 aa).

The signal sequence occupies residues 1-22 (MLVTMRLSRSIAVFTLVTYATG). 4 disulfides stabilise this stretch: cysteine 52–cysteine 129, cysteine 60–cysteine 123, cysteine 61–cysteine 101, and cysteine 130–cysteine 148.

The protein belongs to the fungal hydrophobin family. In terms of assembly, self-assembles to form functional amyloid fibrils called rodlets. Self-assembly into fibrillar rodlets occurs spontaneously at hydrophobic:hydrophilic interfaces and the rodlets further associate laterally to form amphipathic monolayers.

It localises to the secreted. Its subcellular location is the spore wall. Its function is as follows. Aerial growth, conidiation, and dispersal of filamentous fungi in the environment rely upon a capability of their secreting small amphipathic proteins called hydrophobins (HPBs) with low sequence identity. Class I can self-assemble into an outermost layer of rodlet bundles on aerial cell surfaces, conferring cellular hydrophobicity that supports fungal growth, development and dispersal; whereas Class II form highly ordered films at water-air interfaces through intermolecular interactions but contribute nothing to the rodlet structure. RodC is a class I hydrophobin that, unlike rodA, is not required for rodlet formation. The sequence is that of Class I hydrophobin C from Aspergillus fumigatus (strain ATCC MYA-4609 / CBS 101355 / FGSC A1100 / Af293) (Neosartorya fumigata).